A 178-amino-acid chain; its full sequence is Large ribosomal subunit protein uL6 (178 aa).

It belongs to the universal ribosomal protein uL6 family. Part of the 50S ribosomal subunit. Interacts weakly with protein L13.

Its function is as follows. This protein binds to the 23S rRNA, and is important in its secondary structure. It is located near the subunit interface in the base of the L7/L12 stalk, and near the tRNA binding site of the peptidyltransferase center. The polypeptide is Large ribosomal subunit protein uL6 (Haloarcula marismortui (strain ATCC 43049 / DSM 3752 / JCM 8966 / VKM B-1809) (Halobacterium marismortui)).